Reading from the N-terminus, the 375-residue chain is Anhydro-N-acetylmuramic acid kinase (375 aa).

Position 19-26 (19-26 (GTSLDGVD)) interacts with ATP.

This sequence belongs to the anhydro-N-acetylmuramic acid kinase family.

It carries out the reaction 1,6-anhydro-N-acetyl-beta-muramate + ATP + H2O = N-acetyl-D-muramate 6-phosphate + ADP + H(+). The protein operates within amino-sugar metabolism; 1,6-anhydro-N-acetylmuramate degradation. It participates in cell wall biogenesis; peptidoglycan recycling. Its function is as follows. Catalyzes the specific phosphorylation of 1,6-anhydro-N-acetylmuramic acid (anhMurNAc) with the simultaneous cleavage of the 1,6-anhydro ring, generating MurNAc-6-P. Is required for the utilization of anhMurNAc either imported from the medium or derived from its own cell wall murein, and thus plays a role in cell wall recycling. This chain is Anhydro-N-acetylmuramic acid kinase, found in Ruegeria sp. (strain TM1040) (Silicibacter sp.).